A 223-amino-acid chain; its full sequence is UPF0502 protein Sbal223_2520 (223 aa).

This sequence belongs to the UPF0502 family.

The protein is UPF0502 protein Sbal223_2520 of Shewanella baltica (strain OS223).